A 298-amino-acid polypeptide reads, in one-letter code: MSTLEHPLIDRFLDALWLEKGLADNTREAYRNDLQQFNAWLDGRGLRLEGIGRDAILDHLAWRLEQGYKARSTARFLSGLRGFYRYCLRDGLIAEDPTLQVDLPQLGKPLPKSLSEADVEALLAAPEVDDPLGLRDRTMLEVLYACGLRVSELVGLTLEQVNLRQGVVKVFGKGSKERLVPLGEEAIGWLERYLREARGDLLGGRPSDVLFPSLRGEQMTRQTFWHRIKHHAQVAAIGTSISPHTLRHAFATHLLNHGADLRVVQMLLGHSDLSTTQIYTHIARARLQDLHARHHPRG.

Residues 3 to 88 enclose the Core-binding (CB) domain; that stretch reads TLEHPLIDRF…GLRGFYRYCL (86 aa). Positions 109 to 292 constitute a Tyr recombinase domain; sequence PLPKSLSEAD…ARARLQDLHA (184 aa). Residues R149, K173, H244, R247, and H270 contribute to the active site. Y279 functions as the O-(3'-phospho-DNA)-tyrosine intermediate in the catalytic mechanism.

This sequence belongs to the 'phage' integrase family. XerD subfamily. In terms of assembly, forms a cyclic heterotetrameric complex composed of two molecules of XerC and two molecules of XerD.

It localises to the cytoplasm. Functionally, site-specific tyrosine recombinase, which acts by catalyzing the cutting and rejoining of the recombining DNA molecules. The XerC-XerD complex is essential to convert dimers of the bacterial chromosome into monomers to permit their segregation at cell division. It also contributes to the segregational stability of plasmids. This Pseudomonas aeruginosa (strain ATCC 15692 / DSM 22644 / CIP 104116 / JCM 14847 / LMG 12228 / 1C / PRS 101 / PAO1) protein is Tyrosine recombinase XerD.